The sequence spans 292 residues: 4-hydroxy-tetrahydrodipicolinate synthase (292 aa).

Thr-45 serves as a coordination point for pyruvate. Tyr-133 acts as the Proton donor/acceptor in catalysis. Lys-161 (schiff-base intermediate with substrate) is an active-site residue. Ile-203 serves as a coordination point for pyruvate.

It belongs to the DapA family. As to quaternary structure, homotetramer; dimer of dimers.

The protein localises to the cytoplasm. The enzyme catalyses L-aspartate 4-semialdehyde + pyruvate = (2S,4S)-4-hydroxy-2,3,4,5-tetrahydrodipicolinate + H2O + H(+). It functions in the pathway amino-acid biosynthesis; L-lysine biosynthesis via DAP pathway; (S)-tetrahydrodipicolinate from L-aspartate: step 3/4. Its function is as follows. Catalyzes the condensation of (S)-aspartate-beta-semialdehyde [(S)-ASA] and pyruvate to 4-hydroxy-tetrahydrodipicolinate (HTPA). This Klebsiella pneumoniae subsp. pneumoniae (strain ATCC 700721 / MGH 78578) protein is 4-hydroxy-tetrahydrodipicolinate synthase.